Reading from the N-terminus, the 609-residue chain is Transcription factor ntnD (609 aa).

Residues 1 to 7 (MCVGIEC) constitute a DNA-binding region (zn(2)-C6 fungal-type). Residues 46 to 104 (FRDQNESSLNRIHNRRTSNSQPSTRSINNTTTIPASNNEPLALSQPPSASSQNQVEKDQ) are disordered. Polar residues predominate over residues 51–84 (ESSLNRIHNRRTSNSQPSTRSINNTTTIPASNNE). Residues 85-97 (PLALSQPPSASSQ) are compositionally biased toward low complexity.

The protein belongs to the TRI10 transcription regulator family.

It localises to the nucleus. Its function is as follows. Transcription factor; part of the gene cluster that mediates the biosynthesis of meroterpenoids. This chain is Transcription factor ntnD, found in Nectria sp.